A 313-amino-acid chain; its full sequence is Cytochrome c biogenesis protein CcsA (313 aa).

The next 8 membrane-spanning stretches (helical) occupy residues 9 to 29 (ILTH…LITF), 44 to 64 (GIIV…VSSG), 71 to 91 (LYES…IPYF), 111 to 131 (GFAT…VPAL), 143 to 163 (MILG…LLVI), 217 to 237 (VISL…VWAN), 244 to 264 (WNWD…AIYL), and 278 to 298 (AIVA…VNLL).

This sequence belongs to the CcmF/CycK/Ccl1/NrfE/CcsA family. May interact with Ccs1.

The protein resides in the plastid. It is found in the chloroplast thylakoid membrane. Its function is as follows. Required during biogenesis of c-type cytochromes (cytochrome c6 and cytochrome f) at the step of heme attachment. The polypeptide is Cytochrome c biogenesis protein CcsA (Solanum lycopersicum (Tomato)).